The primary structure comprises 120 residues: Large ribosomal subunit protein bL19 (120 aa).

Belongs to the bacterial ribosomal protein bL19 family.

Its function is as follows. This protein is located at the 30S-50S ribosomal subunit interface and may play a role in the structure and function of the aminoacyl-tRNA binding site. The chain is Large ribosomal subunit protein bL19 from Chlorobium chlorochromatii (strain CaD3).